A 327-amino-acid polypeptide reads, in one-letter code: MKPLMLQGHQRAITQIKYNREGDLIFSSAKDSKPSVWYSLNGERLGTFNGHIGAVWCVDVDWTTTRLITGAGDMNTFLWDVETGTALGKIPCNSSVRTCNFSFSGNQASYSTDRAMNHPCELFVIDVRNIDASISSADPVLKLTMNEQQSKITSMLWGALDETVITGHENGSLRIWDLRAVKELNSVNDHTASITDMQMSSDGTMFVSSSKDCSAKLFDSDSLMCLKTFKTERPVNSACISPLFEHVALGGGQDAMEVTTTSTQAGKFDSRFFHLVYEEEFARVKGHFGPINSMAFHPDGKSFATGGEDGFVRLQVFDSSYYEHTFE.

WD repeat units follow at residues G8–T47, G50–K89, E147–S186, D189–T228, and G286–E327.

This sequence belongs to the eIF-3 subunit I family. In terms of assembly, component of the eukaryotic translation initiation factor 3 (eIF-3) complex.

It is found in the cytoplasm. In terms of biological role, component of the eukaryotic translation initiation factor 3 (eIF-3) complex, which is involved in protein synthesis of a specialized repertoire of mRNAs and, together with other initiation factors, stimulates binding of mRNA and methionyl-tRNAi to the 40S ribosome. The eIF-3 complex specifically targets and initiates translation of a subset of mRNAs involved in cell proliferation. The chain is Eukaryotic translation initiation factor 3 subunit I from Anopheles gambiae (African malaria mosquito).